A 412-amino-acid chain; its full sequence is Alpha-1-antiproteinase (412 aa).

The signal sequence occupies residues M1 to A24. S33 bears the Phosphoserine mark. 4 N-linked (GlcNAc...) asparagine glycosylation sites follow: N100, N133, N264, and N313. Residues A367–K386 form an RCL region. S377 carries the phosphoserine modification.

The protein belongs to the serpin family. Interacts with CELA2A. Interacts with ERGIC3 and LMAN1/ERGIC53. Interacts with PRSS1/Trypsin. In terms of tissue distribution, expressed not only in liver but also in kidney tubule cells, where it is regulated by androgens during development.

It localises to the secreted. Its function is as follows. Inhibitor of serine proteases. Its primary target is elastase, but it also has a moderate affinity for plasmin and thrombin. In Mus caroli (Ryukyu mouse), this protein is Alpha-1-antiproteinase (Serpina1).